The chain runs to 101 residues: NAD(P)H-quinone oxidoreductase subunit 4L, chloroplastic (101 aa).

3 helical membrane passes run 2-22 (MFEL…YGLI), 32-52 (ICLE…SDLF), and 61-81 (IFAI…LSIL).

It belongs to the complex I subunit 4L family. As to quaternary structure, NDH is composed of at least 16 different subunits, 5 of which are encoded in the nucleus.

It localises to the plastid. The protein resides in the chloroplast thylakoid membrane. The enzyme catalyses a plastoquinone + NADH + (n+1) H(+)(in) = a plastoquinol + NAD(+) + n H(+)(out). It carries out the reaction a plastoquinone + NADPH + (n+1) H(+)(in) = a plastoquinol + NADP(+) + n H(+)(out). NDH shuttles electrons from NAD(P)H:plastoquinone, via FMN and iron-sulfur (Fe-S) centers, to quinones in the photosynthetic chain and possibly in a chloroplast respiratory chain. The immediate electron acceptor for the enzyme in this species is believed to be plastoquinone. Couples the redox reaction to proton translocation, and thus conserves the redox energy in a proton gradient. This is NAD(P)H-quinone oxidoreductase subunit 4L, chloroplastic from Lolium perenne (Perennial ryegrass).